We begin with the raw amino-acid sequence, 555 residues long: Benzoyl-CoA-dihydrodiol lyase (555 aa).

This sequence belongs to the benzoyl-CoA oxygenase component C family. In terms of assembly, homodimer.

The catalysed reaction is 2,3-epoxy-2,3-dihydrobenzoyl-CoA + 2 H2O = (3Z)-6-oxohex-3-enoyl-CoA + formate + H(+). Functionally, catalyzes the ring opening of 2,3-epoxy-2,3-dihydroxybenzoyl-CoA to form 3,4-didehydroadipyl-CoA semialdehyde. In Aromatoleum evansii (Azoarcus evansii), this protein is Benzoyl-CoA-dihydrodiol lyase (boxC).